The sequence spans 61 residues: Small ribosomal subunit protein uS14 (61 aa).

4 residues coordinate Zn(2+): Cys24, Cys27, Cys40, and Cys43.

The protein belongs to the universal ribosomal protein uS14 family. Zinc-binding uS14 subfamily. Part of the 30S ribosomal subunit. Contacts proteins S3 and S10. Zn(2+) is required as a cofactor.

Binds 16S rRNA, required for the assembly of 30S particles and may also be responsible for determining the conformation of the 16S rRNA at the A site. In Frankia casuarinae (strain DSM 45818 / CECT 9043 / HFP020203 / CcI3), this protein is Small ribosomal subunit protein uS14.